Here is a 178-residue protein sequence, read N- to C-terminus: Nascent polypeptide-associated complex subunit alpha (178 aa).

Residues 16–80 (PKNEKKAREL…AKVDDMNQRI (65 aa)) enclose the NAC-A/B domain. Residues 82–100 (EAQAQQAQQEALQKAAADA) show a composition bias toward low complexity. The disordered stretch occupies residues 82–145 (EAQAQQAQQE…DETGLDPKDI (64 aa)). Positions 101 to 126 (GKTEDKSPEAITADLEKASLGDKKAE) are enriched in basic and acidic residues. Over residues 127–139 (DEEEDEGEIDETG) the composition is skewed to acidic residues. The region spanning 140-178 (LDPKDIEIVVEQTQVSRAKAVKALRNHDGDMVNAIMDLS) is the UBA domain.

This sequence belongs to the NAC-alpha family. Part of the nascent polypeptide-associated complex (NAC), consisting of EGD2 and EGD1. NAC associates with ribosomes via EGD1.

Its subcellular location is the cytoplasm. It localises to the nucleus. Component of the nascent polypeptide-associated complex (NAC), a dynamic component of the ribosomal exit tunnel, protecting the emerging polypeptides from interaction with other cytoplasmic proteins to ensure appropriate nascent protein targeting. The NAC complex also promotes mitochondrial protein import by enhancing productive ribosome interactions with the outer mitochondrial membrane and blocks the inappropriate interaction of ribosomes translating non-secretory nascent polypeptides with translocation sites in the membrane of the endoplasmic reticulum. EGD2 may also be involved in transcription regulation. This chain is Nascent polypeptide-associated complex subunit alpha (EGD2), found in Candida albicans (strain SC5314 / ATCC MYA-2876) (Yeast).